We begin with the raw amino-acid sequence, 323 residues long: Annexin A3 (323 aa).

Ala2 is modified (N-acetylalanine). 4 Annexin repeats span residues 18–89 (FSPS…ALVT), 90–161 (PPAV…TLAD), 173–245 (HLAK…AIVN), and 249–320 (NTPA…KICG). Position 267 is a phosphothreonine (Thr267).

This sequence belongs to the annexin family.

Its function is as follows. Inhibitor of phospholipase A2, also possesses anti-coagulant properties. Also cleaves the cyclic bond of inositol 1,2-cyclic phosphate to form inositol 1-phosphate. This Homo sapiens (Human) protein is Annexin A3 (ANXA3).